A 235-amino-acid chain; its full sequence is Ribosomal RNA small subunit methyltransferase G (235 aa).

S-adenosyl-L-methionine-binding positions include Gly-98, Met-103, 149 to 150, and Arg-164; that span reads VE.

This sequence belongs to the methyltransferase superfamily. RNA methyltransferase RsmG family.

The protein localises to the cytoplasm. The catalysed reaction is guanosine(527) in 16S rRNA + S-adenosyl-L-methionine = N(7)-methylguanosine(527) in 16S rRNA + S-adenosyl-L-homocysteine. Its function is as follows. Specifically methylates the N7 position of guanine in position 527 of 16S rRNA. The polypeptide is Ribosomal RNA small subunit methyltransferase G (Cupriavidus pinatubonensis (strain JMP 134 / LMG 1197) (Cupriavidus necator (strain JMP 134))).